The primary structure comprises 194 residues: E3 ubiquitin-protein ligase RNF185 (194 aa).

The tract at residues 1–32 (MASKGPTTSASTKSSSTGGTSGSSSSNGAGDN) is disordered. The required for ubiquitin ligase activity and protection against ER stress-induced cell death stretch occupies residues 31-82 (DNTNQDNTFECNICLDTAKDAVISLCGHLFCWPCLHQWLETRPNRQVCPVCK). Residues 41-82 (CNICLDTAKDAVISLCGHLFCWPCLHQWLETRPNRQVCPVCK) form an RING-type zinc finger. A disordered region spans residues 92 to 125 (PLYGRGSTGQQDPREKTPPRPQGQRPEPENRGGF). Transmembrane regions (helical) follow at residues 133-153 (GGFQ…ATAF) and 174-194 (QFLS…LLIA).

The protein resides in the mitochondrion outer membrane. It is found in the endoplasmic reticulum membrane. The catalysed reaction is S-ubiquitinyl-[E2 ubiquitin-conjugating enzyme]-L-cysteine + [acceptor protein]-L-lysine = [E2 ubiquitin-conjugating enzyme]-L-cysteine + N(6)-ubiquitinyl-[acceptor protein]-L-lysine.. It functions in the pathway protein modification; protein ubiquitination. In terms of biological role, E3 ubiquitin-protein ligase that regulates selective mitochondrial autophagy by mediating 'Lys-63'-linked polyubiquitination. Acts in the endoplasmic reticulum (ER)-associated degradation (ERAD) pathway, which targets misfolded proteins that accumulate in the endoplasmic reticulum (ER) for ubiquitination and subsequent proteasome-mediated degradation. Protects cells from ER stress-induced apoptosis. Responsible for the cotranslational ubiquitination and degradation of CFTR in the ERAD pathway. Also acts as a regulator of the innate antiviral response by catalyzing 'Lys-27'-linked polyubiquitination of CGAS, thereby promoting CGAS cyclic GMP-AMP synthase activity. Preferentially associates with the E2 enzymes UBE2J1 and UBE2J2. The sequence is that of E3 ubiquitin-protein ligase RNF185 (RNF185) from Gallus gallus (Chicken).